Reading from the N-terminus, the 187-residue chain is uncharacterized protein (187 aa).

The Nudix hydrolase domain maps to N26–Q157. Residues G64–N86 carry the Nudix box motif. Mg(2+) contacts are provided by E80 and E84.

This sequence belongs to the Nudix hydrolase family. PCD1 subfamily. Requires Mn(2+) as cofactor. The cofactor is Mg(2+).

Probably mediates the hydrolysis of some nucleoside diphosphate derivatives. This is an uncharacterized protein from Photorhabdus laumondii subsp. laumondii (strain DSM 15139 / CIP 105565 / TT01) (Photorhabdus luminescens subsp. laumondii).